The following is a 274-amino-acid chain: Orotidine 5'-phosphate decarboxylase (274 aa).

Substrate is bound by residues Asp40, 62 to 64 (KTH), 93 to 102 (DRKFVDIGNT), Tyr227, and Arg245. Lys95 serves as the catalytic Proton donor.

It belongs to the OMP decarboxylase family.

The enzyme catalyses orotidine 5'-phosphate + H(+) = UMP + CO2. The protein operates within pyrimidine metabolism; UMP biosynthesis via de novo pathway; UMP from orotate: step 2/2. This chain is Orotidine 5'-phosphate decarboxylase (URA3), found in Coccidioides immitis (strain RS) (Valley fever fungus).